We begin with the raw amino-acid sequence, 442 residues long: C4-dicarboxylate transport protein (442 aa).

9 consecutive transmembrane segments (helical) span residues 13–33 (VLYF…HFYP), 49–69 (GIKM…IAGM), 81–101 (LALL…LVVV), 149–169 (AFAK…GFAL), 193–213 (MIAI…AFTI), 227–247 (LMGS…GIIA), 312–332 (IYLT…MTLL), 336–356 (TLLA…GSGF), and 357–377 (IVLA…LAII).

This sequence belongs to the dicarboxylate/amino acid:cation symporter (DAACS) (TC 2.A.23) family.

It localises to the cell membrane. Its function is as follows. Responsible for the transport of dicarboxylates such as succinate, fumarate, and malate across the membrane. This chain is C4-dicarboxylate transport protein, found in Polynucleobacter asymbioticus (strain DSM 18221 / CIP 109841 / QLW-P1DMWA-1) (Polynucleobacter necessarius subsp. asymbioticus).